The sequence spans 234 residues: Protein rgg8 (234 aa).

It localises to the cytoplasm. It is found in the nucleus. The protein is Protein rgg8 (rgg8) of Schizosaccharomyces pombe (strain 972 / ATCC 24843) (Fission yeast).